Reading from the N-terminus, the 927-residue chain is Isoleucine--tRNA ligase (927 aa).

The short motif at 57–67 is the 'HIGH' region element; sequence PFANGNIHMGH. An L-isoleucyl-5'-AMP-binding site is contributed by Glu-553. A 'KMSKS' region motif is present at residues 594-598; the sequence is KMSKS. Lys-597 serves as a coordination point for ATP. Zn(2+) is bound by residues Cys-886, Cys-889, Cys-906, and Cys-909.

Belongs to the class-I aminoacyl-tRNA synthetase family. IleS type 1 subfamily. As to quaternary structure, monomer. Requires Zn(2+) as cofactor.

The protein localises to the cytoplasm. The enzyme catalyses tRNA(Ile) + L-isoleucine + ATP = L-isoleucyl-tRNA(Ile) + AMP + diphosphate. In terms of biological role, catalyzes the attachment of isoleucine to tRNA(Ile). As IleRS can inadvertently accommodate and process structurally similar amino acids such as valine, to avoid such errors it has two additional distinct tRNA(Ile)-dependent editing activities. One activity is designated as 'pretransfer' editing and involves the hydrolysis of activated Val-AMP. The other activity is designated 'posttransfer' editing and involves deacylation of mischarged Val-tRNA(Ile). The polypeptide is Isoleucine--tRNA ligase (Lactobacillus acidophilus (strain ATCC 700396 / NCK56 / N2 / NCFM)).